The sequence spans 415 residues: Actin-like protein 9 (415 aa).

The tract at residues 1-22 (MDVNGHPKFQPSPETDGPLPLT) is disordered.

This sequence belongs to the actin family. As to quaternary structure, interacts with ACTL7A.

The protein localises to the cytoplasmic vesicle. It localises to the secretory vesicle. The protein resides in the acrosome. Its subcellular location is the cytoplasm. It is found in the cytoskeleton. The protein localises to the perinuclear theca. In terms of biological role, testis-specic protein that plays an important role in fusion of proacrosomal vesicles and perinuclear theca formation. In Mus musculus (Mouse), this protein is Actin-like protein 9 (Actl9).